Consider the following 98-residue polypeptide: Citrate lyase acyl carrier protein (98 aa).

S14 is subject to O-(phosphoribosyl dephospho-coenzyme A)serine.

It belongs to the CitD family. In terms of assembly, oligomer with a subunit composition of (alpha,beta,gamma)6.

It localises to the cytoplasm. Covalent carrier of the coenzyme of citrate lyase. This Salmonella arizonae (strain ATCC BAA-731 / CDC346-86 / RSK2980) protein is Citrate lyase acyl carrier protein.